The sequence spans 471 residues: Thiohydroximate-O-sulfate sulfur/sulfate-lyase (nitrile-forming) NSP2 (471 aa).

The region spanning 2-144 (VQKVEARGGE…LHSLGAYISS (143 aa)) is the Jacalin-type lectin domain. Kelch repeat units lie at residues 178–226 (KIFS…VRMV), 231–277 (SLYV…SMTA), 281–330 (NVYV…VVQG), 332–379 (VWVV…VVGK), 381–435 (ILVF…GWSA), and 446–471 (GLVM…VDSA). The active-site Proton donor is the Arg238. Residues Arg238, Ser271, Arg293, Gly322, and Val371 each contribute to the a (Z)-N-(sulfonatooxy)alkanimidothioate site. Catalysis depends on Arg293, which acts as the Proton donor. The Fe(2+) site is built by Glu387, Asp391, and His395. Trp433 is an a (Z)-N-(sulfonatooxy)alkanimidothioate binding site.

It belongs to the jacalin lectin family. Requires Fe(2+) as cofactor. In terms of tissue distribution, expressed only in seeds.

It carries out the reaction a (Z)-N-(sulfonatooxy)alkanimidothioate = a nitrile + sulfur + sulfate. The enzyme catalyses (Z)-phenyl-N-(sulfonatooxy)methanimidothioate = phenylacetonitrile + sulfur + sulfate. The catalysed reaction is (Z)-N-(sulfonatooxy)prop-2-enimidothioate = but-3-enenitrile + sulfur + sulfate. It catalyses the reaction (Z)-(indol-3-yl)-N-(sulfonatooxy)methanimidothioate = (indol-3-yl)acetonitrile + sulfur + sulfate. Its activity is regulated as follows. The presence of Fe(2+) supports lyase activity in a dose-dependent manner with both benzylglucosinolate and 2-propenylglucosinolate as substrates. More active at pH 7.4 than at pH 6. In terms of biological role, specifier protein responsible for constitutive and herbivore-induced simple nitrile formation, especially in seeds. Promotes simple nitriles, but not epithionitrile or thiocyanate formation. Converts allylglucosinolate (allyl-GSL), 2-propenylglucosinolate (sinigrin), indol-3-ylmethylglucosinolate (glucobrassicin), benzylisothiocyanate and benzylglucosinolate (glucotropaeolin) to their corresponding simple nitriles in the presence of myrosinase. Catalyzes mainly the conversion of benzylisothiocyanate when benzylglucosinolate is used as the initial substrate of myrosinase. Involved in the regulation of glucosinolate content in seeds, during stratification and germination. The protein is Thiohydroximate-O-sulfate sulfur/sulfate-lyase (nitrile-forming) NSP2 of Arabidopsis thaliana (Mouse-ear cress).